Consider the following 624-residue polypeptide: Kelch-like ECH-associated protein 1 (624 aa).

The tract at residues 1 to 27 is disordered; that stretch reads MQPEPRPSGAGAHTQFLPLRSQRPEGA. Cys-38 carries the S-(2-succinyl)cysteine modification. A BTB domain is found at 77–149; that stretch reads CDVTLQVKYE…AYTASISMGE (73 aa). Residue Arg-135 forms an N5-[4-(S-L-cysteinyl)-5-methyl-1H-imidazol-2-yl]-L-ornithine (Arg-Cys) (interchain with C-151 in KEAP1) linkage. An S-(2-succinyl)cysteine mark is found at Cys-151 and Cys-241. The residue at position 151 (Cys-151) is an S-(2,3-dicarboxypropyl)cysteine; alternate. Cys-151 is modified (S-nitrosocysteine; alternate). An N5-[4-(S-L-cysteinyl)-5-methyl-1H-imidazol-2-yl]-L-ornithine (Cys-Arg) (interchain with R-135 in KEAP1) cross-link involves residue Cys-151. One can recognise a BACK domain in the interval 184–286; sequence AIGIANFAEQ…TPHFLQMQLQ (103 aa). An S-(2,3-dicarboxypropyl)cysteine mark is found at Cys-257 and Cys-273. An S-(2-succinyl)cysteine mark is found at Cys-288 and Cys-319. At Cys-288 the chain carries S-(2,3-dicarboxypropyl)cysteine; alternate. Kelch repeat units follow at residues 327 to 372, 373 to 423, 424 to 470, 471 to 517, 519 to 564, and 565 to 611; these read LIYT…VVGG, LLYA…VIDG, HIYA…VLNR, LLYA…VLHN, IYAA…VHQG, and RIYV…VTME. Cys-434 bears the S-cGMP-cysteine mark. Cys-613 bears the S-(2-succinyl)cysteine mark.

It belongs to the KEAP1 family. As to quaternary structure, component of the BCR(KEAP1) E3 ubiquitin ligase complex, at least composed of 2 molecules of CUL3, 2 molecules of KEAP1, and RBX1. Interacts with NFE2L2/NRF2; the interaction is direct. Forms a ternary complex with NFE2L2/NRF2 and PGAM5. Interacts with (phosphorylated) SQSTM1/p62; the interaction is direct and inactivates the BCR(KEAP1) complex by sequestering it in inclusion bodies, promoting its degradation. Interacts with NFE2L1. Interacts with BPTF and PTMA. Interacts with MAP1LC3B. Interacts indirectly with ENC1. Interacts with SESN1 and SESN2. Interacts with HSP90AA1 and HSP90AB1. Interacts with PGCKA1; this interaction prevents the ubiquitination of KEAP1 by TRIM25, thus protecting KEAP1 protein from degradation. In terms of processing, non-enzymatic covalent modifications of reactive cysteines by electrophile metabolites inactivate the BCR(KEAP1) complex. Accumulation of fumarate promotes the formation of cysteine S-succination (S-(2-succinyl)cysteine), leading to inactivate the BCR(KEAP1) complex and promote NFE2L2/NRF2 nuclear accumulation and activation. Nitric oxide-dependent 8-Nitro-cGMP formation promotes cysteine guanylation (S-cGMP-cysteine), leading to NFE2L2/NRF2 nuclear accumulation and activation. Itaconate, an anti-inflammatory metabolite generated in response to lipopolysaccharide, alkylates cysteines, activating NFE2L2/NRF2. Methylglyoxal, a reactive metabolite that accumulates when the glycolytic enzyme PGK1 is inhibited, promotes formation of a methylimidazole cross-link between proximal Cys-151 and Arg-135 on another KEAP1 molecule, resulting in an inactive dimer that inactivates the BCR(KEAP1) complex. Post-translationally, degraded via a proteasomal-independent process during selective autophagy: interaction with phosphorylated SQSTM1/p62 sequesters KEAP1 in inclusion bodies, leading to its degradation. Auto-ubiquitinated by the BCR(KEAP1) complex. Quinone-induced oxidative stress, but not sulforaphane, increases its ubiquitination. Ubiquitination and subsequent degradation is most pronounced following prolonged exposure of cells to oxidative stress, particularly in glutathione-deficient cells that are highly susceptible to oxidative stress. Deubiquitinated by USP25; leading to stabilization. Ubiquitinated by TRIM25; leading to degradation upon ER stress.

It localises to the cytoplasm. The protein resides in the nucleus. Its pathway is protein modification; protein ubiquitination. Its activity is regulated as follows. Ubiquitin ligase activity of the BCR(KEAP1) complex is inhibited by oxidative stress and electrophile metabolites such as sulforaphane. Electrophile metabolites react with reactive cysteine residues in KEAP1 and trigger non-enzymatic covalent modifications of these cysteine residues, leading to inactivate the ubiquitin ligase activity of the BCR(KEAP1) complex. Selective autophagy also inactivates the BCR(KEAP1) complex via interaction between KEAP1 and SQSTM1/p62, which sequesters the complex in inclusion bodies and promotes its degradation. Substrate-specific adapter of a BCR (BTB-CUL3-RBX1) E3 ubiquitin ligase complex that regulates the response to oxidative stress by targeting NFE2L2/NRF2 for ubiquitination. KEAP1 acts as a key sensor of oxidative and electrophilic stress: in normal conditions, the BCR(KEAP1) complex mediates ubiquitination and degradation of NFE2L2/NRF2, a transcription factor regulating expression of many cytoprotective genes. In response to oxidative stress, different electrophile metabolites trigger non-enzymatic covalent modifications of highly reactive cysteine residues in KEAP1, leading to inactivate the ubiquitin ligase activity of the BCR(KEAP1) complex, promoting NFE2L2/NRF2 nuclear accumulation and expression of phase II detoxifying enzymes. In response to selective autophagy, KEAP1 is sequestered in inclusion bodies following its interaction with SQSTM1/p62, leading to inactivation of the BCR(KEAP1) complex and activation of NFE2L2/NRF2. The BCR(KEAP1) complex also mediates ubiquitination of SQSTM1/p62, increasing SQSTM1/p62 sequestering activity and degradation. The BCR(KEAP1) complex also targets BPTF and PGAM5 for ubiquitination and degradation by the proteasome. The protein is Kelch-like ECH-associated protein 1 of Sus scrofa (Pig).